A 152-amino-acid polypeptide reads, in one-letter code: Cell division protein SepF (152 aa).

Belongs to the SepF family. In terms of assembly, homodimer. Interacts with FtsZ.

It is found in the cytoplasm. Its function is as follows. Cell division protein that is part of the divisome complex and is recruited early to the Z-ring. Probably stimulates Z-ring formation, perhaps through the cross-linking of FtsZ protofilaments. Its function overlaps with FtsA. In Clostridioides difficile (strain 630) (Peptoclostridium difficile), this protein is Cell division protein SepF.